Consider the following 96-residue polypeptide: ATP synthase subunit e, mitochondrial (96 aa).

Ser2 carries the N-acetylserine modification.

This sequence belongs to the ATPase e subunit family. As to quaternary structure, F-type ATPases have 2 components, CF(1) - the catalytic core - and CF(0) - the membrane proton channel. In yeast, the dimeric form of ATP synthase consists of 17 polypeptides: alpha, beta, gamma, delta, epsilon, 4 (B), 5 (OSCP), 6 (A), 8, 9 (C), d, E (Tim11), f, g, h, i/j and k.

The protein localises to the mitochondrion. The protein resides in the mitochondrion inner membrane. Functionally, mitochondrial membrane ATP synthase (F(1)F(0) ATP synthase or Complex V) produces ATP from ADP in the presence of a proton gradient across the membrane which is generated by electron transport complexes of the respiratory chain. F-type ATPases consist of two structural domains, F(1) - containing the extramembraneous catalytic core, and F(0) - containing the membrane proton channel, linked together by a central stalk and a peripheral stalk. During catalysis, ATP synthesis in the catalytic domain of F(1) is coupled via a rotary mechanism of the central stalk subunits to proton translocation. Part of the complex F(0) domain. Minor subunit located with subunit a in the membrane. The chain is ATP synthase subunit e, mitochondrial (TIM11) from Saccharomyces cerevisiae (strain ATCC 204508 / S288c) (Baker's yeast).